A 139-amino-acid chain; its full sequence is Small ribosomal subunit protein uS12m (139 aa).

The transit peptide at 1-29 (MSWSGLLRGLSMSLNYGLALAPRPWGTRP) directs the protein to the mitochondrion. The disordered stretch occupies residues 37–57 (HRRGPPKFPPSKPGPTEGRPQ).

The protein belongs to the universal ribosomal protein uS12 family. In terms of assembly, component of the mitochondrial ribosome small subunit (28S) which comprises a 12S rRNA and about 30 distinct proteins.

The protein localises to the mitochondrion. This Bos taurus (Bovine) protein is Small ribosomal subunit protein uS12m (MRPS12).